The chain runs to 292 residues: 4-hydroxy-tetrahydrodipicolinate synthase (292 aa).

Residue Thr-45 participates in pyruvate binding. Tyr-134 acts as the Proton donor/acceptor in catalysis. Catalysis depends on Lys-162, which acts as the Schiff-base intermediate with substrate. Val-204 contacts pyruvate.

The protein belongs to the DapA family. As to quaternary structure, homotetramer; dimer of dimers.

Its subcellular location is the cytoplasm. The catalysed reaction is L-aspartate 4-semialdehyde + pyruvate = (2S,4S)-4-hydroxy-2,3,4,5-tetrahydrodipicolinate + H2O + H(+). It functions in the pathway amino-acid biosynthesis; L-lysine biosynthesis via DAP pathway; (S)-tetrahydrodipicolinate from L-aspartate: step 3/4. In terms of biological role, catalyzes the condensation of (S)-aspartate-beta-semialdehyde [(S)-ASA] and pyruvate to 4-hydroxy-tetrahydrodipicolinate (HTPA). The protein is 4-hydroxy-tetrahydrodipicolinate synthase of Marinobacter nauticus (strain ATCC 700491 / DSM 11845 / VT8) (Marinobacter aquaeolei).